The primary structure comprises 388 residues: Formate-dependent phosphoribosylglycinamide formyltransferase (388 aa).

Residues 15 to 16 (EL) and Glu-75 each bind N(1)-(5-phospho-beta-D-ribosyl)glycinamide. Residues Arg-107, Lys-148, 153–158 (SSGKGQ), 188–191 (EEFL), and Glu-196 contribute to the ATP site. An ATP-grasp domain is found at 112–302 (DLAAGELALR…EFELHLRAVL (191 aa)). Mg(2+)-binding residues include Glu-261 and Glu-273. Residues Asp-280, Lys-350, and 357-358 (RR) contribute to the N(1)-(5-phospho-beta-D-ribosyl)glycinamide site.

Belongs to the PurK/PurT family. Homodimer.

The catalysed reaction is N(1)-(5-phospho-beta-D-ribosyl)glycinamide + formate + ATP = N(2)-formyl-N(1)-(5-phospho-beta-D-ribosyl)glycinamide + ADP + phosphate + H(+). It functions in the pathway purine metabolism; IMP biosynthesis via de novo pathway; N(2)-formyl-N(1)-(5-phospho-D-ribosyl)glycinamide from N(1)-(5-phospho-D-ribosyl)glycinamide (formate route): step 1/1. In terms of biological role, involved in the de novo purine biosynthesis. Catalyzes the transfer of formate to 5-phospho-ribosyl-glycinamide (GAR), producing 5-phospho-ribosyl-N-formylglycinamide (FGAR). Formate is provided by PurU via hydrolysis of 10-formyl-tetrahydrofolate. The polypeptide is Formate-dependent phosphoribosylglycinamide formyltransferase (Parasynechococcus marenigrum (strain WH8102)).